Reading from the N-terminus, the 210-residue chain is Large ribosomal subunit protein uL4 (210 aa).

A compositionally biased stretch (polar residues) spans Q41–A51. The segment at Q41–S77 is disordered. The segment covering G60 to G71 has biased composition (basic residues).

This sequence belongs to the universal ribosomal protein uL4 family. Part of the 50S ribosomal subunit.

Its function is as follows. One of the primary rRNA binding proteins, this protein initially binds near the 5'-end of the 23S rRNA. It is important during the early stages of 50S assembly. It makes multiple contacts with different domains of the 23S rRNA in the assembled 50S subunit and ribosome. Functionally, forms part of the polypeptide exit tunnel. In Synechocystis sp. (strain ATCC 27184 / PCC 6803 / Kazusa), this protein is Large ribosomal subunit protein uL4.